Consider the following 67-residue polypeptide: Large ribosomal subunit protein bL35 (67 aa).

This sequence belongs to the bacterial ribosomal protein bL35 family.

The protein is Large ribosomal subunit protein bL35 of Dehalococcoides mccartyi (strain ATCC BAA-2100 / JCM 16839 / KCTC 5957 / BAV1).